The chain runs to 271 residues: MERRTVLITGCSQGGIGSALAEAFHQRGFHVFATARKTEKMTHLRDLDWMTLIPLDVTQESQISAAVELIQKHTGGTLDYLVNNAGDGYIIPVLDCDQVHGRQIFEVNFWGPLRMIQEFSPLLIAARGTIVNINSVASETLPLWLGIYSSSKAALLALSETLRLELKPFGVQVLSVMTGAVQTMIFQTNYRLPPDSAYVAWEKQIAAQAEGSEQASRMSATVYAERVVGDILNRRGGITYRGQMASFAYWVVALMPRFLRDLVTVKMAGIS.

I8, T34, K40, D56, N84, Y148, K152, V181, and T183 together coordinate NADP(+). Y148 functions as the Proton acceptor in the catalytic mechanism. The Lowers pKa of active site Tyr role is filled by K152.

Belongs to the short-chain dehydrogenases/reductases (SDR) family.

The protein operates within secondary metabolite biosynthesis. Short-chain dehydrogenase; part of the gene cluster that mediates the biosynthesis of the indole diterpenes penitrems. The geranylgeranyl diphosphate (GGPP) synthase ptmG catalyzes the first step in penitrem biosynthesis via conversion of farnesyl pyrophosphate and isopentyl pyrophosphate into geranylgeranyl pyrophosphate (GGPP). Condensation of indole-3-glycerol phosphate with GGPP by the prenyl transferase ptmC then forms 3-geranylgeranylindole (3-GGI). Epoxidation by the FAD-dependent monooxygenase ptmM leads to a epoxidized-GGI that is substrate of the terpene cyclase ptmB for cyclization to yield paspaline. Paspaline is subsequently converted to 13-desoxypaxilline by the cytochrome P450 monooxygenase ptmP, the latter being then converted to paxilline by the cytochrome P450 monooxygenase ptmQ. Paxilline is converted to beta-paxitriol via C-10 ketoreduction by the short-chain dehydrogenase ptmH which can be monoprenylated at the C-20 by the indole diterpene prenyltransferase ptmD. A two-step elimination (acetylation and elimination) process performed by the O-acetyltransferase ptmV and ptmI leads to the production of the prenylated form of penijanthine. The FAD-linked oxidoreductase ptmO then converts the prenylated form of penijanthine into PC-M5 which is in turn transformed into PC-M4 by the aromatic dimethylallyltransferase ptmE. Five sequential oxidative transformations performed by the cytochrome P450 monooxygenases ptmK, ptmU, ptmL, ptmN and ptmJ yield the various penitrem compounds. PtmK, ptmU and ptmM are involved in the formation of the key bicyclic ring of penitrem C via the formation of the intermediates secopenitrem D and penitrem D. PtmL catalyzes the epoxidation of penitrem D and C to yield penitrem B and F, respectively. PtmJ catalyzes the last benzylic hydroxylation to convert penitrem B to prenitrem E and penitrem F to penitrem A. The protein is Short-chain dehydrogenase ptmH of Penicillium ochrochloron.